The primary structure comprises 470 residues: Argininosuccinate lyase (470 aa).

This sequence belongs to the lyase 1 family. Argininosuccinate lyase subfamily.

The protein resides in the cytoplasm. The catalysed reaction is 2-(N(omega)-L-arginino)succinate = fumarate + L-arginine. It participates in amino-acid biosynthesis; L-arginine biosynthesis; L-arginine from L-ornithine and carbamoyl phosphate: step 3/3. This chain is Argininosuccinate lyase, found in Prochlorococcus marinus (strain MIT 9303).